Reading from the N-terminus, the 251-residue chain is Triosephosphate isomerase (251 aa).

9 to 11 (NWK) lines the substrate pocket. Catalysis depends on His94, which acts as the Electrophile. Glu166 serves as the catalytic Proton acceptor. Substrate is bound by residues Gly172, Ser211, and 232-233 (GG).

This sequence belongs to the triosephosphate isomerase family. As to quaternary structure, homodimer.

The protein localises to the cytoplasm. It catalyses the reaction D-glyceraldehyde 3-phosphate = dihydroxyacetone phosphate. It functions in the pathway carbohydrate biosynthesis; gluconeogenesis. It participates in carbohydrate degradation; glycolysis; D-glyceraldehyde 3-phosphate from glycerone phosphate: step 1/1. Functionally, involved in the gluconeogenesis. Catalyzes stereospecifically the conversion of dihydroxyacetone phosphate (DHAP) to D-glyceraldehyde-3-phosphate (G3P). The sequence is that of Triosephosphate isomerase from Xanthomonas axonopodis pv. citri (strain 306).